The primary structure comprises 209 residues: Ribosomal RNA large subunit methyltransferase E (209 aa).

5 residues coordinate S-adenosyl-L-methionine: Gly-63, Trp-65, Asp-83, Asp-99, and Asp-124. Catalysis depends on Lys-164, which acts as the Proton acceptor.

This sequence belongs to the class I-like SAM-binding methyltransferase superfamily. RNA methyltransferase RlmE family.

The protein localises to the cytoplasm. The enzyme catalyses uridine(2552) in 23S rRNA + S-adenosyl-L-methionine = 2'-O-methyluridine(2552) in 23S rRNA + S-adenosyl-L-homocysteine + H(+). Functionally, specifically methylates the uridine in position 2552 of 23S rRNA at the 2'-O position of the ribose in the fully assembled 50S ribosomal subunit. The sequence is that of Ribosomal RNA large subunit methyltransferase E from Shewanella putrefaciens (strain CN-32 / ATCC BAA-453).